The chain runs to 219 residues: MGQKINPLGLRLGTNQDHYSIWFSQPKAYSKSLQEDQKIRSFIRKYIQNMKISPSGVEGLARISIYKRIDLIELRIFLGFPKLLLENRPQGLEKLQITLQKELNCGNRRLNIVITKVEKPYSNPNILAEFIAGQLKNRVSVRQAMKKAIELAEEADTKGIQVQVAGRLNGQDIARVQWIREGRVPRQTIRATFDYCSYPVRTIYGILGIKIWIFVGEAK.

In terms of domain architecture, KH type-2 spans 39–118 (IRSFIRKYIQ…RLNIVITKVE (80 aa)).

This sequence belongs to the universal ribosomal protein uS3 family. As to quaternary structure, part of the 30S ribosomal subunit.

The protein localises to the plastid. The chain is Small ribosomal subunit protein uS3c (rps3) from Cuscuta obtusiflora (Peruvian dodder).